Here is a 311-residue protein sequence, read N- to C-terminus: Pyrimidine-specific ribonucleoside hydrolase RihA (311 aa).

His240 is a catalytic residue.

It belongs to the IUNH family. RihA subfamily.

In terms of biological role, hydrolyzes with equal efficiency cytidine or uridine to ribose and cytosine or uracil, respectively. This chain is Pyrimidine-specific ribonucleoside hydrolase RihA, found in Escherichia coli (strain K12 / MC4100 / BW2952).